The primary structure comprises 142 residues: MAAAVKWAISNRTIWKHLLPIQNGALSSACHKSTYSSLPDDYNCQVDLALTADGRTIVCYHPSVDIPYEHTKPIPQPDLLHNNEETHEQILKAKLEVRKSKQLEQGPMIEQLSKVFYTTKHRWYPHGQYHNRRKKLNPPRDR.

Residues 1–31 constitute a mitochondrion transit peptide; the sequence is MAAAVKWAISNRTIWKHLLPIQNGALSSACH.

The protein belongs to the mitochondrion-specific ribosomal protein mL42 family. As to quaternary structure, component of the mitochondrial ribosome large subunit (39S) which comprises a 16S rRNA and about 50 distinct proteins. Component of the mitochondrial ribosome small subunit (28S) which comprises a 12S rRNA and about 30 distinct proteins.

The protein resides in the mitochondrion. The chain is Large ribosomal subunit protein mL42 (Mrpl42) from Mus musculus (Mouse).